The following is a 197-amino-acid chain: Putative peptidyl-prolyl cis-trans isomerase (197 aa).

Residues 14–195 (GEIKVVMHTN…HDVVIESIDV (182 aa)) enclose the PPIase cyclophilin-type domain.

It belongs to the cyclophilin-type PPIase family.

It catalyses the reaction [protein]-peptidylproline (omega=180) = [protein]-peptidylproline (omega=0). In terms of biological role, PPIases accelerate the folding of proteins. It catalyzes the cis-trans isomerization of proline imidic peptide bonds in oligopeptides. The polypeptide is Putative peptidyl-prolyl cis-trans isomerase (Staphylococcus aureus (strain COL)).